The following is a 353-amino-acid chain: Quinolinate synthase (353 aa).

Iminosuccinate-binding residues include histidine 47 and serine 68. Residue cysteine 113 coordinates [4Fe-4S] cluster. Iminosuccinate contacts are provided by residues 139–141 (YAN) and serine 156. Residue cysteine 200 coordinates [4Fe-4S] cluster. Residues 226–228 (HPE) and threonine 243 each bind iminosuccinate. A [4Fe-4S] cluster-binding site is contributed by cysteine 297.

This sequence belongs to the quinolinate synthase family. Type 1 subfamily. [4Fe-4S] cluster serves as cofactor.

It localises to the cytoplasm. It catalyses the reaction iminosuccinate + dihydroxyacetone phosphate = quinolinate + phosphate + 2 H2O + H(+). Its pathway is cofactor biosynthesis; NAD(+) biosynthesis; quinolinate from iminoaspartate: step 1/1. Catalyzes the condensation of iminoaspartate with dihydroxyacetone phosphate to form quinolinate. This chain is Quinolinate synthase, found in Yersinia pestis bv. Antiqua (strain Antiqua).